The chain runs to 1534 residues: Dicer-like protein 1 (1534 aa).

The disordered stretch occupies residues 36–70; that stretch reads PSAEPGVEHDQISPGESDEEIEENISDQNNSSSQK. Positions 51-60 are enriched in acidic residues; sequence ESDEEIEENI. Residues 130–311 enclose the Helicase ATP-binding domain; the sequence is LFERAKAQNT…AAATRLETLL (182 aa). 143–150 lines the ATP pocket; the sequence is LDTGSGKT. The DEAH box motif lies at 256-259; that stretch reads DEAH. Positions 456-613 constitute a Helicase C-terminal domain; it reads ELSKHFSHAP…FCETLPEDRI (158 aa). Residues 648–738 form the Dicer dsRNA-binding fold domain; that stretch reads AIAILARYAS…KSIYHKRLPA (91 aa). Residues 888–1016 form the PAZ domain; that stretch reads KTVTFVQEND…ICAEPLKISA (129 aa). RNase III domains lie at 1054–1199 and 1250–1402; these read SDYA…LSGG and ALQV…VDSD. 3 residues coordinate Mg(2+): Glu-1291, Asp-1388, and Glu-1391. Residues 1436–1504 form the DRBM domain; that stretch reads TFLHNRLANE…SERALVVLDG (69 aa). 4 residues coordinate Zn(2+): Cys-1448, His-1475, Cys-1516, and Cys-1518.

It belongs to the helicase family. Dicer subfamily. Requires Mg(2+) as cofactor. Mn(2+) serves as cofactor.

Dicer-like endonuclease involved in cleaving double-stranded RNA in the RNA interference (RNAi) pathway. Produces 21 to 25 bp dsRNAs (siRNAs) which target the selective destruction of homologous RNAs leading to sequence-specific suppression of gene expression, called post-transcriptional gene silencing (PTGS). Part of a broad host defense response against viral infection and transposons. The protein is Dicer-like protein 1 (dcl1) of Aspergillus clavatus (strain ATCC 1007 / CBS 513.65 / DSM 816 / NCTC 3887 / NRRL 1 / QM 1276 / 107).